A 935-amino-acid chain; its full sequence is Coiled-coil domain-containing protein 191 (935 aa).

4 coiled-coil regions span residues 189–324 (RLTM…ENQQ), 366–438 (YTRS…ALLK), 554–589 (RHVFQQQLIEKQKKKLQEQQKTILELKKNQRLAEAQ), and 660–740 (KAME…LEAI). Disordered regions lie at residues 596-661 (SAVT…ILKA) and 678-715 (EKKKKQEEEKLAQLKAQEEERQKREAEEKEAQLERKRE).

The polypeptide is Coiled-coil domain-containing protein 191 (CCDC191) (Macaca fascicularis (Crab-eating macaque)).